Reading from the N-terminus, the 586-residue chain is Septin-9 (586 aa).

Methionine 1 is modified (N-acetylmethionine). Positions 1–14 (MKKSYSGGTRTSSG) are enriched in low complexity. Disordered regions lie at residues 1–49 (MKKS…RVQT), 62–108 (KFQD…SRRT), and 134–268 (RAEV…PASR). Residues serine 22 and serine 30 each carry the phosphoserine modification. A phosphothreonine mark is found at threonine 38, threonine 42, and threonine 49. Lysine 62 is subject to N6-acetyllysine. Phosphoserine occurs at positions 82, 85, 89, and 96. The span at 134-151 (RAEVLGHKTPEPAPRRTE) shows a compositional bias: basic and acidic residues. The residue at position 142 (threonine 142) is a Phosphothreonine. A Phosphotyrosine modification is found at tyrosine 278. One can recognise a Septin-type G domain in the interval 295–567 (QGFEFNIMVV…EAYRVKRLNE (273 aa)). The segment at 305–312 (GQSGLGKS) is G1 motif. 305–312 (GQSGLGKS) is a binding site for GTP. Serine 327 and serine 332 each carry phosphoserine. Residues threonine 339, glycine 365, 445–453 (KADTLTLEE), glycine 501, and arginine 516 each bind GTP. Residues 362 to 365 (DTPG) form a G3 motif region. The segment at 444 to 447 (AKAD) is G4 motif.

The protein belongs to the TRAFAC class TrmE-Era-EngA-EngB-Septin-like GTPase superfamily. Septin GTPase family. Septins polymerize into heterooligomeric protein complexes that form filaments, and associate with cellular membranes, actin filaments, and microtubules. GTPase activity is required for filament formation. Interacts with SEPTIN2, SEPTIN6, SEPTIN7, SEPTIN11 and SEPTIN14. Interacts with RTKN and ARHGEF18. In a mesenchymal cell line, Rho/RTKN signals cause disruption of wild-type septin filaments, but not of those containing isoform 2 variants HNA Trp-106 and Phe-111. In a mesenchymal cell line, isoform 2 variants HNA Trp-106 and Phe-111, but not wild type, form filaments with SEPTIN4. In terms of tissue distribution, widely expressed. Isoforms are differentially expressed in testes, kidney, liver heart, spleen, brain, peripheral blood leukocytes, skeletal muscle and kidney. Specific isoforms appear to demonstrate tissue specificity. Isoform 5 is the most highly expressed in fetal tissue. Isoform 1 is detected in all tissues except the brain and thymus, while isoform 2, isoform 3, and isoform 4 are detected at low levels in approximately half of the fetal tissues.

It is found in the cytoplasm. It localises to the cytoskeleton. Functionally, filament-forming cytoskeletal GTPase. May play a role in cytokinesis (Potential). May play a role in the internalization of 2 intracellular microbial pathogens, Listeria monocytogenes and Shigella flexneri. In Homo sapiens (Human), this protein is Septin-9.